The chain runs to 341 residues: UDP-N-acetyl-alpha-D-glucosaminouronate 4-epimerase (341 aa).

Phenylalanine 27, isoleucine 28, aspartate 47, alanine 50, threonine 51, glycine 52, aspartate 78, isoleucine 79, and glutamine 98 together coordinate NAD(+). Serine 103 lines the UDP-N-acetyl-alpha-D-galactosamine pocket. Threonine 117 lines the NAD(+) pocket. Positions 142, 143, and 166 each coordinate UDP-N-acetyl-alpha-D-galactosamine. NAD(+) contacts are provided by tyrosine 166 and lysine 170. The active-site Proton acceptor is the tyrosine 166. A UDP-N-acetyl-alpha-D-galactosamine-binding site is contributed by asparagine 195. NAD(+) is bound at residue valine 196. The UDP-N-acetyl-alpha-D-galactosamine site is built by valine 210, tyrosine 225, asparagine 227, arginine 234, arginine 299, and aspartate 302.

The protein belongs to the NAD(P)-dependent epimerase/dehydratase family. In terms of assembly, homodimer. The cofactor is NAD(+).

It carries out the reaction UDP-2-acetamido-2-deoxy-alpha-D-glucuronate = UDP-2-acetamido-2-deoxy-alpha-D-galacturonate. The catalysed reaction is UDP-N-acetyl-alpha-D-glucosamine = UDP-N-acetyl-alpha-D-galactosamine. It participates in bacterial outer membrane biogenesis; LPS O-antigen biosynthesis. Functionally, epimerase required for the biosynthesis of the B-band O antigen of serotype O6 lipopolysaccharide. Catalyzes the reversible epimerization of UDP-N-acetylglucosaminuronic acid (UDP-GlcNAcA) to UDP-N-acetylgalactosaminuronic acid (UDP-GalNAcA). Also catalyzes the reversible epimerization of UDP-N-acetylglucosamine (UDP-GlcNAc) to UDP-N-acetylgalactosamine (UDP-GalNAc). Has very low epimerase activity with UDP-glucose (UDP-Glc) and UDP-galactose (UDP-Gal). This chain is UDP-N-acetyl-alpha-D-glucosaminouronate 4-epimerase, found in Pseudomonas aeruginosa.